The chain runs to 206 residues: MDLTVKTLEGKDAGKVSLSDAIFGLEPREDIIARVVRWQLAKRQQGTHKSKGRAEVSRTGAKMYKQKGTGRARHHSARAPQFRGGGKAHGPVVRSHAHDLPKKIRALGLRHALSAKLKAEDIIVIDDLVANEAKTKALAGAFASLGLTNALIIGGAEIEGNFKLAAQNIPNVDVLPVQGINVYDILRRGKLVLSKAAVEALEERFK.

The disordered stretch occupies residues 63–93 (MYKQKGTGRARHHSARAPQFRGGGKAHGPVV). Basic residues predominate over residues 64 to 77 (YKQKGTGRARHHSA).

It belongs to the universal ribosomal protein uL4 family. As to quaternary structure, part of the 50S ribosomal subunit.

Functionally, one of the primary rRNA binding proteins, this protein initially binds near the 5'-end of the 23S rRNA. It is important during the early stages of 50S assembly. It makes multiple contacts with different domains of the 23S rRNA in the assembled 50S subunit and ribosome. Its function is as follows. Forms part of the polypeptide exit tunnel. The chain is Large ribosomal subunit protein uL4 from Rhizobium meliloti (strain 1021) (Ensifer meliloti).